Reading from the N-terminus, the 202-residue chain is MSSTECYGAPPHNYYQDWPTTHSYYPSVPSSYSPLNHHPADIWAAHPSNYIMGNGHVSPPATASGLSPPASRSSNSSAELPTGVTASQHNTYKWMHTKRSQRPAAPKKKVIDENGTNRTNFTTHQLTELEKEFHTAKYVNRTRRTEIASNLKLQEAQVKIWFQNRRMKEKKREKEKAFLARNTWESNSPTSSCSGEDVKNFK.

Disordered stretches follow at residues 60-83 and 166-202; these read PATASGLSPPASRSSNSSAELPTG and RMKEKKREKEKAFLARNTWESNSPTSSCSGEDVKNFK. The segment covering 63–81 has biased composition (low complexity); the sequence is ASGLSPPASRSSNSSAELP. Residues 114–173 constitute a DNA-binding region (homeobox); that stretch reads NGTNRTNFTTHQLTELEKEFHTAKYVNRTRRTEIASNLKLQEAQVKIWFQNRRMKEKKRE. Residues 183–194 are compositionally biased toward polar residues; it reads TWESNSPTSSCS.

The protein localises to the nucleus. In Caenorhabditis elegans, this protein is Homeobox protein ceh-13 (ceh-13).